The primary structure comprises 477 residues: Ribulose bisphosphate carboxylase large chain (477 aa).

Residues 1–2 (MS) constitute a propeptide that is removed on maturation. At Pro3 the chain carries N-acetylproline. 2 residues coordinate substrate: Asn123 and Thr173. The Proton acceptor role is filled by Lys175. Lys177 is a substrate binding site. 3 residues coordinate Mg(2+): Lys201, Asp203, and Glu204. Lys201 carries the post-translational modification N6-carboxylysine. The Proton acceptor role is filled by His294. Residues Arg295, His327, and Ser379 each contribute to the substrate site.

This sequence belongs to the RuBisCO large chain family. Type I subfamily. As to quaternary structure, heterohexadecamer of 8 large chains and 8 small chains; disulfide-linked. The disulfide link is formed within the large subunit homodimers. The cofactor is Mg(2+). In terms of processing, the disulfide bond which can form in the large chain dimeric partners within the hexadecamer appears to be associated with oxidative stress and protein turnover.

The protein resides in the plastid. It localises to the chloroplast. It carries out the reaction 2 (2R)-3-phosphoglycerate + 2 H(+) = D-ribulose 1,5-bisphosphate + CO2 + H2O. The enzyme catalyses D-ribulose 1,5-bisphosphate + O2 = 2-phosphoglycolate + (2R)-3-phosphoglycerate + 2 H(+). In terms of biological role, ruBisCO catalyzes two reactions: the carboxylation of D-ribulose 1,5-bisphosphate, the primary event in carbon dioxide fixation, as well as the oxidative fragmentation of the pentose substrate in the photorespiration process. Both reactions occur simultaneously and in competition at the same active site. In Avena sativa (Oat), this protein is Ribulose bisphosphate carboxylase large chain.